The sequence spans 342 residues: Ferredoxin--NADP reductase (342 aa).

FAD contacts are provided by Cys17, Asp36, Gln44, Tyr49, Val89, Phe124, Asp289, and Thr330.

This sequence belongs to the ferredoxin--NADP reductase type 2 family. As to quaternary structure, homodimer. Requires FAD as cofactor.

The catalysed reaction is 2 reduced [2Fe-2S]-[ferredoxin] + NADP(+) + H(+) = 2 oxidized [2Fe-2S]-[ferredoxin] + NADPH. This is Ferredoxin--NADP reductase from Bradyrhizobium diazoefficiens (strain JCM 10833 / BCRC 13528 / IAM 13628 / NBRC 14792 / USDA 110).